The chain runs to 525 residues: MAQNIHDHRILILDFGSQYTQLIARRVREIGVYCEIKAFDITDDELNEFNPKGIILAGGPESVTQLGGPRAPEGLFDRGIPVLGICYGMQTMAEQLGGRVASSEKREFGYAQVKVRAKGPLLADITDHLTPAGDSLLDVWMSHGDKVVAMPEGFELLASTESAPIAAMQDLSRNLYGVQFHPEVTHTLQGKRILEHFVLTISGCEALWTPAKIVDDAVRQIREQVGSDKVLLGLSGGVDSSVTAALLHKAIGDQLTCVFVDNGLLRLHEGDQVMDMFASNMGVKVIRVDAEDLFLSKLKGVNDPEQKRKIIGNTFIDVFDDEAANIKDVNWLAQGTIYPDVIESAASKTGKAHVIKSHHNVGGLPETMKMKLVEPLRELFKDEVRKIGLELGLPYDMVYRHPFPGPGLGVRILGEVKKEYADILRRADAIFLEELHRADLYHKTSQAFAVFLPVKSVGVVGDARRYEYVIAIRAVETVDFMTARWARLPYELLETVSNRIINEISGVSRVTYDISSKPPATIEWE.

Positions 9 to 207 (RILILDFGSQ…VLTISGCEAL (199 aa)) constitute a Glutamine amidotransferase type-1 domain. Cys-86 serves as the catalytic Nucleophile. Catalysis depends on residues His-181 and Glu-183. The GMPS ATP-PPase domain occupies 208 to 400 (WTPAKIVDDA…LGLPYDMVYR (193 aa)). 235–241 (SGGVDSS) contacts ATP.

As to quaternary structure, homodimer.

It carries out the reaction XMP + L-glutamine + ATP + H2O = GMP + L-glutamate + AMP + diphosphate + 2 H(+). It functions in the pathway purine metabolism; GMP biosynthesis; GMP from XMP (L-Gln route): step 1/1. Its function is as follows. Catalyzes the synthesis of GMP from XMP. The chain is GMP synthase [glutamine-hydrolyzing] from Marinobacter nauticus (strain ATCC 700491 / DSM 11845 / VT8) (Marinobacter aquaeolei).